We begin with the raw amino-acid sequence, 1514 residues long: ABC transporter C family member 3 (1514 aa).

Transmembrane regions (helical) follow at residues 35–55, 83–103, 116–136, 153–173, 183–203, 325–345, 364–386, 439–459, 463–483, and 551–571; these read PLFL…VLFF, ALFC…LSGF, LVSS…SICL, LWLV…FVMY, LLVF…VAVL, ILVT…GPAL, YVLV…HWFF, WYMH…WILY, GLAS…NFPF, and FVFW…CILL. The ABC transmembrane type-1 1 domain maps to 325–606; it reads ILVTAFFAFI…LPDTISMIVQ (282 aa). The ABC transporter 1 domain occupies 640 to 863; that stretch reads VEVINSTLSW…GTDFMELIGA (224 aa). ATP is bound at residue 675–682; sequence GTVGSGKS. 5 consecutive transmembrane segments (helical) span residues 940 to 960, 987 to 1007, 1077 to 1097, 1181 to 1201, and 1205 to 1225; these read YITL…QVLF, LSTL…CILL, IGII…FIPV, LSSL…TGVI, and LAGL…WLIW. In terms of domain architecture, ABC transmembrane type-1 2 spans 950 to 1232; the sequence is VPFILLGQVL…LIWTLCNLEN (283 aa). In terms of domain architecture, ABC transporter 2 spans 1271 to 1503; sequence IRDLQVRYAP…KSSSFSKLVA (233 aa). 1303 to 1310 serves as a coordination point for ATP; the sequence is GRTGSGKS.

It belongs to the ABC transporter superfamily. ABCC family. Conjugate transporter (TC 3.A.1.208) subfamily. In terms of tissue distribution, ubiquitous.

The protein resides in the membrane. It carries out the reaction ATP + H2O + xenobioticSide 1 = ADP + phosphate + xenobioticSide 2.. With respect to regulation, glutathione-conjugate transport is inhibited by decyl-glutathione and, to a lower extent, by GS-GS, but not by GSH. All transports are inhibited by vanadate. Pump for glutathione S-conjugates. Mediates the transport of glutathione conjugates such as chlorodinitrobenzene-GS (DNB-GS), and of chlorophyll catabolites such as Bn-NCC-1. Also transports heavy metals such as cadmium (Cd). The sequence is that of ABC transporter C family member 3 (ABCC3) from Arabidopsis thaliana (Mouse-ear cress).